Here is a 184-residue protein sequence, read N- to C-terminus: Ribosome maturation factor RimM (184 aa).

The PRC barrel domain maps to Asp101 to Leu180.

This sequence belongs to the RimM family. Binds ribosomal protein uS19.

It localises to the cytoplasm. In terms of biological role, an accessory protein needed during the final step in the assembly of 30S ribosomal subunit, possibly for assembly of the head region. Essential for efficient processing of 16S rRNA. May be needed both before and after RbfA during the maturation of 16S rRNA. It has affinity for free ribosomal 30S subunits but not for 70S ribosomes. This Helicobacter pylori (strain Shi470) protein is Ribosome maturation factor RimM.